Here is a 46-residue protein sequence, read N- to C-terminus: uncharacterized protein (46 aa).

This is an uncharacterized protein from Archaeoglobus fulgidus (strain ATCC 49558 / DSM 4304 / JCM 9628 / NBRC 100126 / VC-16).